The sequence spans 291 residues: Aspartate carbamoyltransferase catalytic subunit (291 aa).

Carbamoyl phosphate-binding residues include arginine 49 and threonine 50. Lysine 77 contributes to the L-aspartate binding site. Arginine 99, histidine 127, and glutamine 130 together coordinate carbamoyl phosphate. The L-aspartate site is built by arginine 160 and arginine 210. Carbamoyl phosphate-binding residues include glycine 249 and proline 250.

It belongs to the aspartate/ornithine carbamoyltransferase superfamily. ATCase family. Heterododecamer (2C3:3R2) of six catalytic PyrB chains organized as two trimers (C3), and six regulatory PyrI chains organized as three dimers (R2).

The catalysed reaction is carbamoyl phosphate + L-aspartate = N-carbamoyl-L-aspartate + phosphate + H(+). Its pathway is pyrimidine metabolism; UMP biosynthesis via de novo pathway; (S)-dihydroorotate from bicarbonate: step 2/3. In terms of biological role, catalyzes the condensation of carbamoyl phosphate and aspartate to form carbamoyl aspartate and inorganic phosphate, the committed step in the de novo pyrimidine nucleotide biosynthesis pathway. The chain is Aspartate carbamoyltransferase catalytic subunit from Sulfurimonas denitrificans (strain ATCC 33889 / DSM 1251) (Thiomicrospira denitrificans (strain ATCC 33889 / DSM 1251)).